The primary structure comprises 144 residues: SVVKSEDFTLPAYVDRRDYPLPDVAHVKHLSASQKALKEKEKASWSSLSMDEKVELYRIKFKESFAEMNRRSNEWKTVVGTAMFFFGITALIVMWEKRYVYGPLPQTFDKEWVAMQTKRMLDMKVNPIQGLASKWDYEKNEWKK.

At 1–73 (SVVKSEDFTL…SFAEMNRRSN (73 aa)) the chain is on the mitochondrial matrix side. Lys-4 is subject to N6-acetyllysine; alternate. Residue Lys-4 is modified to N6-succinyllysine; alternate. Lys-28 carries the N6-acetyllysine modification. A phosphoserine mark is found at Ser-31 and Ser-33. Residue Lys-35 is modified to N6-acetyllysine; alternate. N6-succinyllysine; alternate is present on Lys-35. N6-acetyllysine is present on Lys-42. A helical transmembrane segment spans residues 74–99 (EWKTVVGTAMFFFGITALIVMWEKRY). Residues 100–144 (VYGPLPQTFDKEWVAMQTKRMLDMKVNPIQGLASKWDYEKNEWKK) lie on the Mitochondrial intermembrane side of the membrane.

It belongs to the cytochrome c oxidase IV family. As to quaternary structure, component of the cytochrome c oxidase (complex IV, CIV), a multisubunit enzyme composed of 14 subunits. The complex is composed of a catalytic core of 3 subunits MT-CO1, MT-CO2 and MT-CO3, encoded in the mitochondrial DNA, and 11 supernumerary subunits COX4I, COX5A, COX5B, COX6A, COX6B, COX6C, COX7A, COX7B, COX7C, COX8 and NDUFA4, which are encoded in the nuclear genome. The complex exists as a monomer or a dimer and forms supercomplexes (SCs) in the inner mitochondrial membrane with NADH-ubiquinone oxidoreductase (complex I, CI) and ubiquinol-cytochrome c oxidoreductase (cytochrome b-c1 complex, complex III, CIII), resulting in different assemblies (supercomplex SCI(1)III(2)IV(1) and megacomplex MCI(2)III(2)IV(2)). Interacts with PHB2; the interaction decreases in absence of SPHK2. Interacts with AFG1L. Interacts with ABCB7; this interaction allows the regulation of cellular iron homeostasis and cellular reactive oxygen species (ROS) levels in cardiomyocytes. Interacts with FLVCR2; this interaction occurs in the absence of heme and is disrupted upon heme binding. Interacts with IRGC.

It is found in the mitochondrion inner membrane. It functions in the pathway energy metabolism; oxidative phosphorylation. In terms of biological role, component of the cytochrome c oxidase, the last enzyme in the mitochondrial electron transport chain which drives oxidative phosphorylation. The respiratory chain contains 3 multisubunit complexes succinate dehydrogenase (complex II, CII), ubiquinol-cytochrome c oxidoreductase (cytochrome b-c1 complex, complex III, CIII) and cytochrome c oxidase (complex IV, CIV), that cooperate to transfer electrons derived from NADH and succinate to molecular oxygen, creating an electrochemical gradient over the inner membrane that drives transmembrane transport and the ATP synthase. Cytochrome c oxidase is the component of the respiratory chain that catalyzes the reduction of oxygen to water. Electrons originating from reduced cytochrome c in the intermembrane space (IMS) are transferred via the dinuclear copper A center (CU(A)) of subunit 2 and heme A of subunit 1 to the active site in subunit 1, a binuclear center (BNC) formed by heme A3 and copper B (CU(B)). The BNC reduces molecular oxygen to 2 water molecules using 4 electrons from cytochrome c in the IMS and 4 protons from the mitochondrial matrix. The chain is Cytochrome c oxidase subunit 4 isoform 1, mitochondrial (COX4I1) from Theropithecus gelada (Gelada baboon).